Reading from the N-terminus, the 147-residue chain is Large ribosomal subunit protein bL9 (147 aa).

This sequence belongs to the bacterial ribosomal protein bL9 family.

Its function is as follows. Binds to the 23S rRNA. In Flavobacterium psychrophilum (strain ATCC 49511 / DSM 21280 / CIP 103535 / JIP02/86), this protein is Large ribosomal subunit protein bL9.